The sequence spans 286 residues: Cytotoxin (286 aa).

A propeptide spanning residues 267–286 (TFYNYASLVPDLETRVRSAE) is cleaved from the precursor.

The protein belongs to the aerolysin family.

The protein localises to the secreted. Cytotoxin is thought to form hydrophilic pores in cell membranes. The chain is Cytotoxin (ctx) from Pseudomonas aeruginosa.